The chain runs to 195 residues: Large ribosomal subunit protein bL9 (195 aa).

It belongs to the bacterial ribosomal protein bL9 family.

Binds to the 23S rRNA. The polypeptide is Large ribosomal subunit protein bL9 (Rhodopseudomonas palustris (strain TIE-1)).